The primary structure comprises 318 residues: tRNA uridine(34) hydroxylase (318 aa).

Positions Glu123 to Gln217 constitute a Rhodanese domain. Residue Cys177 is the Cysteine persulfide intermediate of the active site.

Belongs to the TrhO family.

The catalysed reaction is uridine(34) in tRNA + AH2 + O2 = 5-hydroxyuridine(34) in tRNA + A + H2O. Functionally, catalyzes oxygen-dependent 5-hydroxyuridine (ho5U) modification at position 34 in tRNAs. The polypeptide is tRNA uridine(34) hydroxylase (Staphylococcus aureus (strain bovine RF122 / ET3-1)).